The following is a 156-amino-acid chain: 2-C-methyl-D-erythritol 2,4-cyclodiphosphate synthase (156 aa).

A divalent metal cation-binding residues include Asp9 and His11. 4-CDP-2-C-methyl-D-erythritol 2-phosphate is bound by residues Asp9–His11 and His36–Ser37. His44 contributes to the a divalent metal cation binding site. Residue Asn58–Gly60 coordinates 4-CDP-2-C-methyl-D-erythritol 2-phosphate.

This sequence belongs to the IspF family. As to quaternary structure, homotrimer. It depends on a divalent metal cation as a cofactor.

The enzyme catalyses 4-CDP-2-C-methyl-D-erythritol 2-phosphate = 2-C-methyl-D-erythritol 2,4-cyclic diphosphate + CMP. It participates in isoprenoid biosynthesis; isopentenyl diphosphate biosynthesis via DXP pathway; isopentenyl diphosphate from 1-deoxy-D-xylulose 5-phosphate: step 4/6. Its function is as follows. Involved in the biosynthesis of isopentenyl diphosphate (IPP) and dimethylallyl diphosphate (DMAPP), two major building blocks of isoprenoid compounds. Catalyzes the conversion of 4-diphosphocytidyl-2-C-methyl-D-erythritol 2-phosphate (CDP-ME2P) to 2-C-methyl-D-erythritol 2,4-cyclodiphosphate (ME-CPP) with a corresponding release of cytidine 5-monophosphate (CMP). This is 2-C-methyl-D-erythritol 2,4-cyclodiphosphate synthase from Kosmotoga olearia (strain ATCC BAA-1733 / DSM 21960 / TBF 19.5.1).